The following is a 633-amino-acid chain: uncharacterized protein (633 aa).

This is an uncharacterized protein from Archaeoglobus fulgidus (strain ATCC 49558 / DSM 4304 / JCM 9628 / NBRC 100126 / VC-16).